A 257-amino-acid chain; its full sequence is Lipid A 4'-phosphatase (257 aa).

Helical transmembrane passes span 21 to 41 (FGAF…FRAF), 85 to 105 (IFFR…IECY), 119 to 139 (KLKV…NVIL), 174 to 194 (CSFV…LLFV), 201 to 221 (ALVP…LSFG), and 225 to 245 (LSDV…LLAL).

The protein belongs to the lipid A LpxF 4'-phosphatase family.

The protein localises to the cell inner membrane. Its pathway is bacterial outer membrane biogenesis; LPS lipid A biosynthesis. Functionally, probably removes the 4'-phosphate moiety from lipid A species. Not seen to act on other membrane components, nor does it dephosphorylate the 1-phosphate group of lipid A and/or lipid A precursors. The sequence is that of Lipid A 4'-phosphatase from Rhizobium etli (strain ATCC 51251 / DSM 11541 / JCM 21823 / NBRC 15573 / CFN 42).